The sequence spans 488 residues: Membrane-bound lytic murein transglycosylase F (488 aa).

Positions 1 to 25 (MFARPAIRMRCATGLLAIGTLLMLA) are cleaved as a signal peptide. The tract at residues 26 to 269 (GCGEEPKPSV…RLKERYYGHV (244 aa)) is non-LT domain. Positions 270-488 (DVLGYVGAYT…RTLDEQTPPL (219 aa)) are LT domain. Glu316 is an active-site residue.

It in the N-terminal section; belongs to the bacterial solute-binding protein 3 family. This sequence in the C-terminal section; belongs to the transglycosylase Slt family.

The protein resides in the cell outer membrane. It catalyses the reaction Exolytic cleavage of the (1-&gt;4)-beta-glycosidic linkage between N-acetylmuramic acid (MurNAc) and N-acetylglucosamine (GlcNAc) residues in peptidoglycan, from either the reducing or the non-reducing ends of the peptidoglycan chains, with concomitant formation of a 1,6-anhydrobond in the MurNAc residue.. In terms of biological role, murein-degrading enzyme that degrades murein glycan strands and insoluble, high-molecular weight murein sacculi, with the concomitant formation of a 1,6-anhydromuramoyl product. Lytic transglycosylases (LTs) play an integral role in the metabolism of the peptidoglycan (PG) sacculus. Their lytic action creates space within the PG sacculus to allow for its expansion as well as for the insertion of various structures such as secretion systems and flagella. This chain is Membrane-bound lytic murein transglycosylase F, found in Ectopseudomonas mendocina (strain ymp) (Pseudomonas mendocina).